Reading from the N-terminus, the 771-residue chain is Kinase suppressor of Ras A (771 aa).

The segment covering 152–169 (SRTSSGSTDEPSGQSTPA) has biased composition (polar residues). Residues 152–172 (SRTSSGSTDEPSGQSTPAIVT) are disordered. The Phorbol-ester/DAG-type zinc finger occupies 215–269 (PHKWHRSTKFRFSGDAVCHFCQRPLGFGFLNAWEKCRSCKWKVHTQCKGRVGDSC). Disordered stretches follow at residues 290–339 (GMWK…ISGN) and 414–433 (DSTGSQEVDSEAAPSQEAVD). Positions 318–331 (SSSSTNSSAPSTPA) are enriched in low complexity. In terms of domain architecture, Protein kinase spans 477-748 (DKQAPIIGRG…TDINLKLTAL (272 aa)). ATP is bound by residues 483 to 491 (IGRGRFGKV) and K503. D600 (proton acceptor) is an active-site residue.

This sequence belongs to the protein kinase superfamily. TKL Ser/Thr protein kinase family. Interacts with mek-2. Requires Mg(2+) as cofactor.

The catalysed reaction is L-seryl-[protein] + ATP = O-phospho-L-seryl-[protein] + ADP + H(+). It catalyses the reaction L-threonyl-[protein] + ATP = O-phospho-L-threonyl-[protein] + ADP + H(+). Its function is as follows. Serine/threonine-protein kinase which positively regulates Ras-mediated signaling probably acting at the level of let-60/ras or/and lin-45/raf. Involved in sex myoblast migration. Plays a role in responses to M.nematophilum-mediated bacterial infection by promoting tail swelling and preventing constipation. Functions redundantly with ksr-2 in the Ras-mediated regulation of larval survival, the development of excretory canal and in mpk-1 phosphorylation in somatic cells. In addition, involved in determining vulval precursor cell fate during vulval induction independently of its kinase activity. Plays a role in egg-laying. The polypeptide is Kinase suppressor of Ras A (Caenorhabditis elegans).